The sequence spans 75 residues: UPF0346 protein OB1736 (75 aa).

The protein belongs to the UPF0346 family.

This Oceanobacillus iheyensis (strain DSM 14371 / CIP 107618 / JCM 11309 / KCTC 3954 / HTE831) protein is UPF0346 protein OB1736.